Here is a 68-residue protein sequence, read N- to C-terminus: Neuronal regeneration-related protein (68 aa).

The segment at 42-68 (EETGAASLTPPGSREFTSPATSYLHPF) is disordered.

Interacts with FLNA. Interacts with the latency-associated peptides (LAP) of TGFB1 and TGFB2; the interaction results in a decrease in TGFB autoinduction. In terms of processing, phosphorylated on Ser-59. Phosphorylation decreases stability and activity. In terms of tissue distribution, expressed in brain and fetal lung.

The protein localises to the cytoplasm. May have roles in cellular differentiation. Ectopic expression induces differentiation of fibroblast into myofibroblast and myofibroblast ameboid migration. Increases retinoic-acid regulation of lipid-droplet biogenesis. May also have neural functions. Promotes axonal regeneration and augments motility of gliomas. Down-regulates the expression of TGFB1 and TGFB2 but not of TGFB3. May play a role in the regulation of alveolar generation. This Mus musculus (Mouse) protein is Neuronal regeneration-related protein (Nrep).